A 118-amino-acid polypeptide reads, in one-letter code: Small ribosomal subunit protein uS13 (118 aa).

The disordered stretch occupies residues 92-118 (RRGLPVRGQRTKTNARTRKGPRKPIKK).

This sequence belongs to the universal ribosomal protein uS13 family. Part of the 30S ribosomal subunit. Forms a loose heterodimer with protein S19. Forms two bridges to the 50S subunit in the 70S ribosome.

Located at the top of the head of the 30S subunit, it contacts several helices of the 16S rRNA. In the 70S ribosome it contacts the 23S rRNA (bridge B1a) and protein L5 of the 50S subunit (bridge B1b), connecting the 2 subunits; these bridges are implicated in subunit movement. Contacts the tRNAs in the A and P-sites. The polypeptide is Small ribosomal subunit protein uS13 (Yersinia enterocolitica serotype O:8 / biotype 1B (strain NCTC 13174 / 8081)).